A 382-amino-acid polypeptide reads, in one-letter code: Phosphatidylglycerol--prolipoprotein diacylglyceryl transferase (382 aa).

3 helical membrane-spanning segments follow: residues 18–38, 53–73, and 91–111; these read IQWY…MFVF, FFIF…SFVI, and LAIQ…FNFF. Arg162 serves as a coordination point for a 1,2-diacyl-sn-glycero-3-phospho-(1'-sn-glycerol). 4 helical membrane-spanning segments follow: residues 213 to 233, 243 to 263, 274 to 294, and 302 to 322; these read IPLF…IYFV, GTIG…LENF, ITTS…CQFI, and FWTY…TTLF.

Belongs to the Lgt family.

It is found in the cell membrane. The enzyme catalyses L-cysteinyl-[prolipoprotein] + a 1,2-diacyl-sn-glycero-3-phospho-(1'-sn-glycerol) = an S-1,2-diacyl-sn-glyceryl-L-cysteinyl-[prolipoprotein] + sn-glycerol 1-phosphate + H(+). It functions in the pathway protein modification; lipoprotein biosynthesis (diacylglyceryl transfer). Its function is as follows. Catalyzes the transfer of the diacylglyceryl group from phosphatidylglycerol to the sulfhydryl group of the N-terminal cysteine of a prolipoprotein, the first step in the formation of mature lipoproteins. This Mycoplasma genitalium (strain ATCC 33530 / DSM 19775 / NCTC 10195 / G37) (Mycoplasmoides genitalium) protein is Phosphatidylglycerol--prolipoprotein diacylglyceryl transferase.